Here is a 633-residue protein sequence, read N- to C-terminus: Threonine--tRNA ligase (633 aa).

One can recognise a TGS domain in the interval 1–59; sequence MIRITFSAEQKVKEYSGKVTGFDILQPDVLKEAIAFKVNGELHDLSREIEADAEIEVIQ. A catalytic region spans residues 240-532; it reads DHRKIAKDMD…LIENYAGKFP (293 aa). Residues C332, H383, and H509 each coordinate Zn(2+).

This sequence belongs to the class-II aminoacyl-tRNA synthetase family. Homodimer. It depends on Zn(2+) as a cofactor.

The protein localises to the cytoplasm. It carries out the reaction tRNA(Thr) + L-threonine + ATP = L-threonyl-tRNA(Thr) + AMP + diphosphate + H(+). Its function is as follows. Catalyzes the attachment of threonine to tRNA(Thr) in a two-step reaction: L-threonine is first activated by ATP to form Thr-AMP and then transferred to the acceptor end of tRNA(Thr). Also edits incorrectly charged L-seryl-tRNA(Thr). The chain is Threonine--tRNA ligase from Wolbachia sp. subsp. Drosophila simulans (strain wRi).